Here is a 610-residue protein sequence, read N- to C-terminus: Dihydroxy-acid dehydratase (610 aa).

Aspartate 81 contributes to the Mg(2+) binding site. Cysteine 122 provides a ligand contact to [2Fe-2S] cluster. Mg(2+) contacts are provided by aspartate 123 and lysine 124. Lysine 124 carries the N6-carboxylysine modification. Cysteine 193 contributes to the [2Fe-2S] cluster binding site. Glutamate 489 is a Mg(2+) binding site. Serine 515 serves as the catalytic Proton acceptor.

The protein belongs to the IlvD/Edd family. In terms of assembly, homodimer. [2Fe-2S] cluster serves as cofactor. The cofactor is Mg(2+).

The catalysed reaction is (2R)-2,3-dihydroxy-3-methylbutanoate = 3-methyl-2-oxobutanoate + H2O. The enzyme catalyses (2R,3R)-2,3-dihydroxy-3-methylpentanoate = (S)-3-methyl-2-oxopentanoate + H2O. It participates in amino-acid biosynthesis; L-isoleucine biosynthesis; L-isoleucine from 2-oxobutanoate: step 3/4. It functions in the pathway amino-acid biosynthesis; L-valine biosynthesis; L-valine from pyruvate: step 3/4. Functionally, functions in the biosynthesis of branched-chain amino acids. Catalyzes the dehydration of (2R,3R)-2,3-dihydroxy-3-methylpentanoate (2,3-dihydroxy-3-methylvalerate) into 2-oxo-3-methylpentanoate (2-oxo-3-methylvalerate) and of (2R)-2,3-dihydroxy-3-methylbutanoate (2,3-dihydroxyisovalerate) into 2-oxo-3-methylbutanoate (2-oxoisovalerate), the penultimate precursor to L-isoleucine and L-valine, respectively. The protein is Dihydroxy-acid dehydratase of Xylella fastidiosa (strain M23).